A 382-amino-acid polypeptide reads, in one-letter code: Na(+)/H(+) antiporter NhaA 2 (382 aa).

A run of 10 helical transmembrane segments spans residues 11 to 31 (FSVP…LDPA), 45 to 65 (LSFH…IAAV), 91 to 111 (LGGV…VGLP), 116 to 136 (GWGI…RMVF), 145 to 165 (YLLL…ALFY), 171 to 191 (PVVA…WGLG), 197 to 214 (SYWP…IGLH), 287 to 307 (WLVL…FGLL), 324 to 344 (LLVA…VSGS), and 353 to 373 (AAAK…MLLG).

It belongs to the NhaA Na(+)/H(+) (TC 2.A.33) antiporter family.

It localises to the cell inner membrane. It catalyses the reaction Na(+)(in) + 2 H(+)(out) = Na(+)(out) + 2 H(+)(in). Na(+)/H(+) antiporter that extrudes sodium in exchange for external protons. This is Na(+)/H(+) antiporter NhaA 2 from Pelobacter propionicus (strain DSM 2379 / NBRC 103807 / OttBd1).